The chain runs to 466 residues: MAKTLYEKLFDAHVVYEAENETPLLYIDRHLVHEVTSPQAFDGLRAHGRPVRQPGKTFATMDHNVSTQTKDINACGEMARIQMQELIKNCKEFGVELYDLNHPYQGIVHVMGPEQGVTLPGMTIVCGDSHTATHGAFGALAFGIGTSEVEHVLATQTLKQGRAKTMKIEVQGKAAPGITAKDIVLAIIGKTGSAGGTGHVVEFCGEAIRDLSMEGRMTLCNMAIEMGAKAGLVAPDETTFNYVKGRLHAPKGKDFDDAVAYWKTLQTDEGATFDTVVTLRAEEISPQVTWGTNPGQVISVNDNIPDPASFADPVERASAEKALAYMGLKPGIPLTEVAIDKVFIGSCTNSRIEDLRAAAEIAKGRKVAPGVQALVVPGSGPVKAQAEAEGLDKIFIEAGFEWRLPGCSMCLAMNNDRLNPGERCASTSNRNFEGRQGRGGRTHLVSPAMAAAAAVTGHFADIRNIK.

The [4Fe-4S] cluster site is built by C347, C407, and C410.

The protein belongs to the aconitase/IPM isomerase family. LeuC type 1 subfamily. In terms of assembly, heterodimer of LeuC and LeuD. [4Fe-4S] cluster is required as a cofactor.

It catalyses the reaction (2R,3S)-3-isopropylmalate = (2S)-2-isopropylmalate. Its pathway is amino-acid biosynthesis; L-leucine biosynthesis; L-leucine from 3-methyl-2-oxobutanoate: step 2/4. Functionally, catalyzes the isomerization between 2-isopropylmalate and 3-isopropylmalate, via the formation of 2-isopropylmaleate. The polypeptide is 3-isopropylmalate dehydratase large subunit (Escherichia coli O17:K52:H18 (strain UMN026 / ExPEC)).